The chain runs to 360 residues: Decorin (360 aa).

The first 16 residues, M1–A16, serve as a signal peptide directing secretion. The propeptide occupies G17–E30. S34 is a glycosylation site (O-linked (Xyl...) (glycosaminoglycan) serine). 2 disulfide bridges follow: C55-C61 and C59-C68. 12 LRR repeats span residues E74 to I94, T95 to I118, S119 to L142, K143 to I163, T164 to L187, K188 to I213, T214 to I234, T235 to I258, S259 to L282, V283 to I305, S306 to V335, and Q336 to K360. N-linked (GlcNAc...) asparagine glycosylation occurs at N212. Residues N263 and N304 are each glycosylated (N-linked (GlcNAc...) asparagine). C314 and C347 are oxidised to a cystine.

Belongs to the small leucine-rich proteoglycan (SLRP) family. SLRP class I subfamily. As to quaternary structure, binds to type I and type II collagen, fibronectin and TGF-beta. Forms a ternary complex with MFAP2 and ELN. Interacts with DPT. In terms of processing, the attached glycosaminoglycan chain can be either chondroitin sulfate or dermatan sulfate depending upon the tissue of origin.

The protein resides in the secreted. The protein localises to the extracellular space. It is found in the extracellular matrix. Functionally, may affect the rate of fibrils formation. This Ovis aries (Sheep) protein is Decorin (DCN).